Consider the following 397-residue polypeptide: MNIHEYQAKALLKGYGAPVAEGVAILKAEEAEAAAKSLPGPLYVVKSQIHAGGRGKGKFKELSPEAKGGVRLAKSVEDVVANVKEMLGNTLVTAQTGEAGKQVNRLYIEDGADIERELYCSLLVDRSVGKVAFVVSTEGGMDIEAVAHDTPEKIQTIAIDPETGVTAADVAKISSALKLDGAAGEDAKSLFPLLYKAFNEKDMSLLEINPLIVMKNGHLRVLDAKMSFDGNALFRHDDVRALRDETEEDAKEIEASKWDLAYVALDGNIGCMVNGAGLAMATMDIIKLYGKEPANFCDVGGGAGKEKVAAAFKIITADPKVEGILVNIFGGIMKCDVIAEGVIAAVKEVGLKVPLVVRLEGTNVELGKKILNESGLAITAADDLDDAAKKIVAAING.

The ATP-grasp domain maps to 9 to 254; that stretch reads KALLKGYGAP…ETEEDAKEIE (246 aa). Residues K46, 53-55, E109, A112, and E117 each bind ATP; that span reads GRG. N209 and D223 together coordinate Mg(2+). Substrate contacts are provided by residues N274 and 331–333; that span reads GIM.

Belongs to the succinate/malate CoA ligase beta subunit family. In terms of assembly, heterotetramer of two alpha and two beta subunits. The cofactor is Mg(2+).

It catalyses the reaction succinate + ATP + CoA = succinyl-CoA + ADP + phosphate. The enzyme catalyses GTP + succinate + CoA = succinyl-CoA + GDP + phosphate. It participates in carbohydrate metabolism; tricarboxylic acid cycle; succinate from succinyl-CoA (ligase route): step 1/1. Succinyl-CoA synthetase functions in the citric acid cycle (TCA), coupling the hydrolysis of succinyl-CoA to the synthesis of either ATP or GTP and thus represents the only step of substrate-level phosphorylation in the TCA. The beta subunit provides nucleotide specificity of the enzyme and binds the substrate succinate, while the binding sites for coenzyme A and phosphate are found in the alpha subunit. The sequence is that of Succinate--CoA ligase [ADP-forming] subunit beta from Rhizobium etli (strain CIAT 652).